The following is a 377-amino-acid chain: Succinyl-diaminopimelate desuccinylase (377 aa).

Position 66 (His66) interacts with Zn(2+). Residue Asp68 is part of the active site. Asp99 is a Zn(2+) binding site. Glu133 acts as the Proton acceptor in catalysis. Zn(2+) contacts are provided by Glu134, Glu162, and His348.

The protein belongs to the peptidase M20A family. DapE subfamily. As to quaternary structure, homodimer. It depends on Zn(2+) as a cofactor. Co(2+) serves as cofactor.

The enzyme catalyses N-succinyl-(2S,6S)-2,6-diaminopimelate + H2O = (2S,6S)-2,6-diaminopimelate + succinate. It functions in the pathway amino-acid biosynthesis; L-lysine biosynthesis via DAP pathway; LL-2,6-diaminopimelate from (S)-tetrahydrodipicolinate (succinylase route): step 3/3. Its function is as follows. Catalyzes the hydrolysis of N-succinyl-L,L-diaminopimelic acid (SDAP), forming succinate and LL-2,6-diaminopimelate (DAP), an intermediate involved in the bacterial biosynthesis of lysine and meso-diaminopimelic acid, an essential component of bacterial cell walls. This chain is Succinyl-diaminopimelate desuccinylase, found in Histophilus somni (strain 129Pt) (Haemophilus somnus).